Here is a 405-residue protein sequence, read N- to C-terminus: Bifunctional enzyme IspD/IspF (405 aa).

The tract at residues methionine 1–valine 246 is 2-C-methyl-D-erythritol 4-phosphate cytidylyltransferase. The tract at residues arginine 247–threonine 405 is 2-C-methyl-D-erythritol 2,4-cyclodiphosphate synthase. A divalent metal cation is bound by residues aspartate 253 and histidine 255. 4-CDP-2-C-methyl-D-erythritol 2-phosphate contacts are provided by residues aspartate 253–histidine 255 and histidine 279–serine 280. Histidine 287 lines the a divalent metal cation pocket. Residues aspartate 301–glycine 303, threonine 377–glutamate 380, phenylalanine 384, and arginine 387 each bind 4-CDP-2-C-methyl-D-erythritol 2-phosphate.

This sequence in the N-terminal section; belongs to the IspD/TarI cytidylyltransferase family. IspD subfamily. The protein in the C-terminal section; belongs to the IspF family. A divalent metal cation is required as a cofactor.

It catalyses the reaction 2-C-methyl-D-erythritol 4-phosphate + CTP + H(+) = 4-CDP-2-C-methyl-D-erythritol + diphosphate. The catalysed reaction is 4-CDP-2-C-methyl-D-erythritol 2-phosphate = 2-C-methyl-D-erythritol 2,4-cyclic diphosphate + CMP. Its pathway is isoprenoid biosynthesis; isopentenyl diphosphate biosynthesis via DXP pathway; isopentenyl diphosphate from 1-deoxy-D-xylulose 5-phosphate: step 2/6. The protein operates within isoprenoid biosynthesis; isopentenyl diphosphate biosynthesis via DXP pathway; isopentenyl diphosphate from 1-deoxy-D-xylulose 5-phosphate: step 4/6. In terms of biological role, bifunctional enzyme that catalyzes the formation of 4-diphosphocytidyl-2-C-methyl-D-erythritol from CTP and 2-C-methyl-D-erythritol 4-phosphate (MEP) (IspD), and catalyzes the conversion of 4-diphosphocytidyl-2-C-methyl-D-erythritol 2-phosphate (CDP-ME2P) to 2-C-methyl-D-erythritol 2,4-cyclodiphosphate (ME-CPP) with a corresponding release of cytidine 5-monophosphate (CMP) (IspF). This is Bifunctional enzyme IspD/IspF from Rhizobium etli (strain CIAT 652).